We begin with the raw amino-acid sequence, 127 residues long: Protein ApaG (127 aa).

Residues 3 to 127 enclose the ApaG domain; that stretch reads ANSPPTIKCN…FRLAIPNILH (125 aa).

The chain is Protein ApaG from Photobacterium profundum (strain SS9).